Here is a 359-residue protein sequence, read N- to C-terminus: Src kinase-associated phosphoprotein 2 (359 aa).

Phosphoserine occurs at positions 5, 6, and 9. The interval Gly67–Leu88 is disordered. Tyr75 carries the post-translational modification Phosphotyrosine. Ser87 and Ser90 each carry phosphoserine. The 104-residue stretch at Phe116 to Gln219 folds into the PH domain. Residues Tyr151 and Tyr197 each carry the phosphotyrosine modification. Ser223 carries the phosphoserine modification. The residue at position 261 (Tyr261) is a Phosphotyrosine. Phosphoserine is present on Ser286. An SH3 domain is found at Asp297–Asp358.

The protein belongs to the SKAP family. In terms of assembly, interacts with FYB1, which is required for SKAP2 protein stability. Interacts with PTPNS1. Part of a complex consisting of SKAP2, FYB1 and PTPNS1. Part of a complex consisting of SKAP2, FYB1 and LILRB3. Interacts with LAT, GRB2, PTK2B, and PRAM1. May interact with actin. May interact with FYN, HCK and LYN. Interacts with FASLG.

The protein localises to the cytoplasm. May be involved in B-cell and macrophage adhesion processes. In B-cells, may act by coupling the B-cell receptor (BCR) to integrin activation. May play a role in src signaling pathway. The chain is Src kinase-associated phosphoprotein 2 (SKAP2) from Pongo abelii (Sumatran orangutan).